A 407-amino-acid chain; its full sequence is Type II secretion system protein L (407 aa).

Residues 1–257 (MEGSVSEFLT…WLRYWQIWRK (257 aa)) lie on the Cytoplasmic side of the membrane. Residues 258–275 (VAIAAGLFVAVSISYSLF) traverse the membrane as a helical segment. Residues 276–407 (QAHQYEAQAD…VFGVFVVKPK (132 aa)) are Periplasmic-facing.

Belongs to the GSP L family. As to quaternary structure, type II secretion system is composed of four main components: the outer membrane complex, the inner membrane complex, the cytoplasmic secretion ATPase and the periplasm-spanning pseudopilus. Forms homodimers. Interacts with EpsM/GspM. Interacts with EpsE/GspE and EpsF/GspF.

The protein resides in the cell inner membrane. Functionally, inner membrane component of the type II secretion system required for the energy-dependent secretion of extracellular factors such as proteases and toxins from the periplasm. Plays a role in the complex assembly and recruits EpsM resulting in a stable complex in the inner membrane. Provides thus a link between the energy-providing EpsE protein in the cytoplasm and the rest of the T2SS machinery. The polypeptide is Type II secretion system protein L (epsL) (Vibrio cholerae serotype O1 (strain ATCC 39315 / El Tor Inaba N16961)).